Consider the following 1380-residue polypeptide: Receptor-type adenylate cyclase A (1380 aa).

The Cytoplasmic portion of the chain corresponds to 1–34 (MAMQIRPSLGGCLRHGGAGDHAARRLSRLRAAKV). A helical membrane pass occupies residues 35–55 (FVPTAVVCVLLCCAPWVMAEI). Residues 56–891 (TNDAEREPVY…SHALTPAQRN (836 aa)) are Extracellular-facing. N-linked (GlcNAc...) asparagine glycans are attached at residues Asn422, Asn478, Asn497, and Asn567. Residues 892–912 (GLIAGCVVGAVVLIATCTLLL) traverse the membrane as a helical segment. Over 913–1380 (YCCMDNRNND…NPHYARHAFE (468 aa)) the chain is Cytoplasmic. Positions 933–1087 (TLLFTDIESS…DTSNMAARTE (155 aa)) constitute a Guanylate cyclase domain. Mg(2+) is bound by residues Asp938 and Asp981. Residues 1270 to 1298 (LAREGDSAAGGVRPRLPGSPVTSLPAGGS) form a disordered region.

It belongs to the adenylyl cyclase class-3 family. Requires Mg(2+) as cofactor.

The protein localises to the membrane. It carries out the reaction ATP = 3',5'-cyclic AMP + diphosphate. Its function is as follows. Could act as a receptor for an unknown ligand. The sequence is that of Receptor-type adenylate cyclase A (RAC-A) from Leishmania donovani.